The chain runs to 356 residues: Leucine-rich repeat and transmembrane domain-containing protein 1 (356 aa).

The N-terminal stretch at 1 to 32 (MLNEGLCCGAWAMKGTLLLVSSVGLLLPGVGS) is a signal peptide. Positions 33 to 62 (CPMKCLCHPSSNSVDCSGQGLSKVPRDLPP) constitute an LRRNT domain. At 33 to 299 (CPMKCLCHPS…PTNLRHAVAT (267 aa)) the chain is on the extracellular side. LRR repeat units follow at residues 63-84 (WTVTLLLQDNRIHWLPALAFQS), 87-108 (LLSTLNLSNNSLSNLAAEAFYG), 111-132 (HLRVLNVTQNSLLSIESSFAHA), 135-156 (GLRELDLSSNSLRILPTSLGKP), and 159-180 (NLTVFAVQQNHLLHLDRELLEA). N-linked (GlcNAc...) asparagine glycosylation is found at Asn-92 and Asn-116. Residue Asn-159 is glycosylated (N-linked (GlcNAc...) asparagine). The 55-residue stretch at 192-246 (NPWICDCHLLGLKLWLERFTFQGGETDGAICRLPEPWQGKALLSIPHELYQPCSL) folds into the LRRCT domain. Residues 255-277 (LVQQPGSAPQDAQKSHENSSGQQ) show a composition bias toward polar residues. A disordered region spans residues 255 to 288 (LVQQPGSAPQDAQKSHENSSGQQDPLECEAKPKP). The chain crosses the membrane as a helical span at residues 300 to 320 (VVITGVVCGIVCLMMLAAAIY). Over 321 to 356 (GCTYAAITAQYQGRPLASARKSEKMGSKELMDSSSA) the chain is Cytoplasmic.

It localises to the membrane. This is Leucine-rich repeat and transmembrane domain-containing protein 1 (Lrtm1) from Mus musculus (Mouse).